The sequence spans 309 residues: Protease HtpX homolog (309 aa).

A run of 2 helical transmembrane segments spans residues 7–27 (TTVL…MLGG) and 29–49 (QGMM…YWYS). Residue His131 coordinates Zn(2+). Glu132 is an active-site residue. His135 serves as a coordination point for Zn(2+). The next 2 membrane-spanning stretches (helical) occupy residues 141 to 161 (ILIG…ASMA) and 182 to 202 (IGLI…QMAI). Glu207 serves as a coordination point for Zn(2+). The segment at 278-309 (RHGSDSGTGNRDSSIRRRNMNTEAKAAWDRLR) is disordered.

This sequence belongs to the peptidase M48B family. It depends on Zn(2+) as a cofactor.

It is found in the cell inner membrane. In Desulforapulum autotrophicum (strain ATCC 43914 / DSM 3382 / VKM B-1955 / HRM2) (Desulfobacterium autotrophicum), this protein is Protease HtpX homolog.